The chain runs to 215 residues: Cytochrome b6 (215 aa).

Residues 32–52 traverse the membrane as a helical segment; it reads IFYCLGGITLTCFLVQVATGF. Cys-35 contacts heme c. Residues His-86 and His-100 each coordinate heme b. The next 3 helical transmembrane spans lie at 90–110, 116–136, and 186–206; these read ASMM…TGGF, LTWV…VTGY, and LHTF…FPMI. Residues His-187 and His-202 each contribute to the heme b site.

It belongs to the cytochrome b family. PetB subfamily. In terms of assembly, the 4 large subunits of the cytochrome b6-f complex are cytochrome b6, subunit IV (17 kDa polypeptide, PetD), cytochrome f and the Rieske protein, while the 4 small subunits are PetG, PetL, PetM and PetN. The complex functions as a dimer. Requires heme b as cofactor. Heme c is required as a cofactor.

The protein localises to the plastid. It localises to the chloroplast thylakoid membrane. Component of the cytochrome b6-f complex, which mediates electron transfer between photosystem II (PSII) and photosystem I (PSI), cyclic electron flow around PSI, and state transitions. In Jasminum nudiflorum (Winter jasmine), this protein is Cytochrome b6.